The primary structure comprises 154 residues: Myoglobin (154 aa).

Residues 2-148 (GLSEGEWQLV…FRKDIAAKYK (147 aa)) form the Globin domain. At S4 the chain carries Phosphoserine. H65 provides a ligand contact to nitrite. Residue H65 participates in O2 binding. T68 carries the phosphothreonine modification. Heme b is bound at residue H94.

Monomer.

The protein localises to the cytoplasm. Its subcellular location is the sarcoplasm. It catalyses the reaction Fe(III)-heme b-[protein] + nitric oxide + H2O = Fe(II)-heme b-[protein] + nitrite + 2 H(+). The enzyme catalyses H2O2 + AH2 = A + 2 H2O. Functionally, monomeric heme protein which primary function is to store oxygen and facilitate its diffusion within muscle tissues. Reversibly binds oxygen through a pentacoordinated heme iron and enables its timely and efficient release as needed during periods of heightened demand. Depending on the oxidative conditions of tissues and cells, and in addition to its ability to bind oxygen, it also has a nitrite reductase activity whereby it regulates the production of bioactive nitric oxide. Under stress conditions, like hypoxia and anoxia, it also protects cells against reactive oxygen species thanks to its pseudoperoxidase activity. The chain is Myoglobin (MB) from Delphinapterus leucas (Beluga whale).